Consider the following 153-residue polypeptide: MSIELDLQIACENENGLPSEKELMTWLNAVIPQFQPQAELTIRIVDEKESHELNHEYRGKDKPTNVLSFPFEAPPGLELNLLGDLIICRQVVEEEAIEQNKPLLAHWAHMVVHGSLHLLGYDHIEDDEAEEMESLETELMQGMGFEDPYIAEK.

Residues His113, His117, and His123 each contribute to the Zn(2+) site.

It belongs to the endoribonuclease YbeY family. Zn(2+) serves as cofactor.

Its subcellular location is the cytoplasm. Its function is as follows. Single strand-specific metallo-endoribonuclease involved in late-stage 70S ribosome quality control and in maturation of the 3' terminus of the 16S rRNA. In Aliivibrio fischeri (strain ATCC 700601 / ES114) (Vibrio fischeri), this protein is Endoribonuclease YbeY.